Reading from the N-terminus, the 93-residue chain is MENDRQAIVVWMNHLKQVRSLKRFGNVHYVSRKLKYAVLYCDMAEVEDISNKVSRFHYVKRVEMSFRPFLKTEYESKKEMMYEHKNEDVQISI.

The protein belongs to the UPF0298 family.

It is found in the cytoplasm. The sequence is that of UPF0298 protein LMHCC_0506 from Listeria monocytogenes serotype 4a (strain HCC23).